The primary structure comprises 160 residues: tRNA (cytidine(34)-2'-O)-methyltransferase (160 aa).

Positions 78, 100, 120, and 128 each coordinate S-adenosyl-L-methionine.

The protein belongs to the class IV-like SAM-binding methyltransferase superfamily. RNA methyltransferase TrmH family. TrmL subfamily. As to quaternary structure, homodimer.

It is found in the cytoplasm. It catalyses the reaction cytidine(34) in tRNA + S-adenosyl-L-methionine = 2'-O-methylcytidine(34) in tRNA + S-adenosyl-L-homocysteine + H(+). The enzyme catalyses 5-carboxymethylaminomethyluridine(34) in tRNA(Leu) + S-adenosyl-L-methionine = 5-carboxymethylaminomethyl-2'-O-methyluridine(34) in tRNA(Leu) + S-adenosyl-L-homocysteine + H(+). In terms of biological role, methylates the ribose at the nucleotide 34 wobble position in the two leucyl isoacceptors tRNA(Leu)(CmAA) and tRNA(Leu)(cmnm5UmAA). Catalyzes the methyl transfer from S-adenosyl-L-methionine to the 2'-OH of the wobble nucleotide. The polypeptide is tRNA (cytidine(34)-2'-O)-methyltransferase (Beijerinckia indica subsp. indica (strain ATCC 9039 / DSM 1715 / NCIMB 8712)).